A 456-amino-acid polypeptide reads, in one-letter code: Bifunctional protein GlmU (456 aa).

A pyrophosphorylase region spans residues 1-229 (MLNNAMSVVI…LSEVEGVNNR (229 aa)). UDP-N-acetyl-alpha-D-glucosamine is bound by residues 11-14 (LAAG), Lys25, Gln76, 81-82 (GT), 103-105 (YGD), Gly140, Glu154, Asn169, and Asn227. Asp105 contacts Mg(2+). Asn227 contacts Mg(2+). The tract at residues 230-250 (LQLSRLERVYQSEQAEKLLLA) is linker. Residues 251–456 (GVMLRDPARF…EGWRRPVKKK (206 aa)) form an N-acetyltransferase region. Residues Arg333 and Lys351 each contribute to the UDP-N-acetyl-alpha-D-glucosamine site. His363 serves as the catalytic Proton acceptor. Positions 366 and 377 each coordinate UDP-N-acetyl-alpha-D-glucosamine. Acetyl-CoA-binding positions include Ala380, 386 to 387 (NY), Ser405, Ala423, and Arg440.

In the N-terminal section; belongs to the N-acetylglucosamine-1-phosphate uridyltransferase family. It in the C-terminal section; belongs to the transferase hexapeptide repeat family. Homotrimer. The cofactor is Mg(2+).

It is found in the cytoplasm. The catalysed reaction is alpha-D-glucosamine 1-phosphate + acetyl-CoA = N-acetyl-alpha-D-glucosamine 1-phosphate + CoA + H(+). The enzyme catalyses N-acetyl-alpha-D-glucosamine 1-phosphate + UTP + H(+) = UDP-N-acetyl-alpha-D-glucosamine + diphosphate. Its pathway is nucleotide-sugar biosynthesis; UDP-N-acetyl-alpha-D-glucosamine biosynthesis; N-acetyl-alpha-D-glucosamine 1-phosphate from alpha-D-glucosamine 6-phosphate (route II): step 2/2. The protein operates within nucleotide-sugar biosynthesis; UDP-N-acetyl-alpha-D-glucosamine biosynthesis; UDP-N-acetyl-alpha-D-glucosamine from N-acetyl-alpha-D-glucosamine 1-phosphate: step 1/1. It functions in the pathway bacterial outer membrane biogenesis; LPS lipid A biosynthesis. Catalyzes the last two sequential reactions in the de novo biosynthetic pathway for UDP-N-acetylglucosamine (UDP-GlcNAc). The C-terminal domain catalyzes the transfer of acetyl group from acetyl coenzyme A to glucosamine-1-phosphate (GlcN-1-P) to produce N-acetylglucosamine-1-phosphate (GlcNAc-1-P), which is converted into UDP-GlcNAc by the transfer of uridine 5-monophosphate (from uridine 5-triphosphate), a reaction catalyzed by the N-terminal domain. In Escherichia coli O6:K15:H31 (strain 536 / UPEC), this protein is Bifunctional protein GlmU.